The sequence spans 404 residues: Sorting nexin-5 (404 aa).

A2 is modified (N-acetylalanine). The region spanning L25–L172 is the PX domain. A 1,2-diacyl-sn-glycero-3-phospho-(1D-myo-inositol-4,5-bisphosphate) contacts are provided by residues S40–K46, F99–K105, and E113–M116. The interaction with DOCK1 stretch occupies residues D169 to V261. The interval F183 to T200 is membrane-binding amphipathic helix. Position 193 is a phosphoserine (S193). One can recognise a BAR domain in the interval V202–N404. At K275 the chain carries N6-acetyllysine.

The protein belongs to the sorting nexin family. In terms of assembly, forms heterodimers with BAR domain-containing sorting nexins SNX1 and SNX2; does not homodimerize. The heterodimers are proposed to self-assemble into helical arrays on the membrane to stabilize and expand local membrane curvature underlying endosomal tubule formation. Thought to be a component of the originally described retromer complex (also called SNX-BAR retromer) which is a pentamer containing the heterotrimeric retromer cargo-selective complex (CSC), also described as vacuolar protein sorting subcomplex (VPS), and a heterodimeric membrane-deforming subcomplex formed between SNX1 or SNX2 and SNX5 or SNX6 (also called SNX-BAR subcomplex); the respective CSC and SNX-BAR subcomplexes associate with low affinity. Interacts with SNX1, SNX2, VPS26A, VPS29, VPS35, DCTN1, DOCK1, MIB1, PIP5K1C isoform 3. Interacts with HGS; increased by PIP5K1C isoform 3 kinase activity and by PtdIns(3P) and/or PtdIns(3,4)P2. As to quaternary structure, (Microbial infection) Interacts with human cytomegalovirus proteins UL35 and UL35A; these interactions inhibit the ability of USP7 to form nuclear bodies.

The protein resides in the endosome. It localises to the early endosome. Its subcellular location is the early endosome membrane. It is found in the cell membrane. The protein localises to the cytoplasmic vesicle membrane. The protein resides in the cytoplasm. It localises to the cell projection. Its subcellular location is the phagocytic cup. It is found in the ruffle. Functionally, involved in several stages of intracellular trafficking. Interacts with membranes containing phosphatidylinositol 3-phosphate (PtdIns(3P)) or phosphatidylinositol 3,4-bisphosphate (PtdIns(3,4)P2). Acts in part as component of the retromer membrane-deforming SNX-BAR subcomplex. The SNX-BAR retromer mediates retrograde transport of cargo proteins from endosomes to the trans-Golgi network (TGN) and is involved in endosome-to-plasma membrane transport for cargo protein recycling. The SNX-BAR subcomplex functions to deform the donor membrane into a tubular profile called endosome-to-TGN transport carrier (ETC). Does not have in vitro vesicle-to-membrane remodeling activity. Involved in retrograde transport of lysosomal enzyme receptor IGF2R. May function as link between endosomal transport vesicles and dynactin. Plays a role in the internalization of EGFR after EGF stimulation. Involved in EGFR endosomal sorting and degradation; the function involves PIP5K1C isoform 3 and is retromer-independent. Together with PIP5K1C isoform 3 facilitates HGS interaction with ubiquitinated EGFR, which initiates EGFR sorting to intraluminal vesicles (ILVs) of the multivesicular body for subsequent lysosomal degradation. Involved in E-cadherin sorting and degradation; inhibits PIP5K1C isoform 3-mediated E-cadherin degradation. Plays a role in macropinocytosis. The chain is Sorting nexin-5 (SNX5) from Homo sapiens (Human).